Reading from the N-terminus, the 121-residue chain is Protein yippee-like 5 (121 aa).

Residues 13 to 110 (RLFSCANCDA…LERALVRESE (98 aa)) form the Yippee domain. Residues Cys17, Cys20, Cys73, and Cys76 each contribute to the Zn(2+) site. Ser118 bears the Phosphoserine mark.

Belongs to the yippee family. Identified in the CTLH complex that contains GID4, RANBP9 and/or RANBP10, MKLN1, MAEA, RMND5A (or alternatively its paralog RMND5B), GID8, ARMC8, WDR26 and YPEL5. Within this complex, MAEA, RMND5A (or alternatively its paralog RMND5B), GID8, WDR26, and RANBP9 and/or RANBP10 form the catalytic core, while GID4, MKLN1, ARMC8 and YPEL5 have ancillary roles. Interacts with RANBP9 and RANBP10.

The protein localises to the nucleus. The protein resides in the cytoplasm. Its subcellular location is the cytoskeleton. It localises to the microtubule organizing center. It is found in the centrosome. The protein localises to the spindle pole. The protein resides in the midbody. In terms of biological role, component of the CTLH E3 ubiquitin-protein ligase complex that selectively accepts ubiquitin from UBE2H and mediates ubiquitination and subsequent proteasomal degradation of the transcription factor HBP1. Required for normal cell proliferation. The protein is Protein yippee-like 5 (YPEL5) of Macaca fascicularis (Crab-eating macaque).